The following is a 132-amino-acid chain: RuBisCO chaperone RbcX (132 aa).

Residues 110 to 132 form a disordered region; it reads HLSLSNPSPESEQQTISDTDWDH. Over residues 111–132 the composition is skewed to polar residues; sequence LSLSNPSPESEQQTISDTDWDH.

It belongs to the RbcX family. Homodimer. Interacts with the exposed C-terminal peptide of RbcL via its central cleft, contacts a second RbcL monomer via its peripheral polar surface. RbcX and Raf1 can bind simultaneously to RbcL.

The protein localises to the carboxysome. It is found in the cytoplasm. An RbcL-specific chaperone. The central cleft of the RbcX homodimer (RbcX2) binds the C-terminus of an RbcL monomer, stabilizing the C-terminus and probably preventing its reassociation with chaperonin GroEL-ES. At the same time the peripheral region of RbcX2 binds a second RbcL monomer, bridging the RbcL homodimers in the correct orientation. The RbcX2(2)-bound RbcL dimers then assemble into the RbcL8 core (RbcL8-(RbcX2)8). RbcS binding triggers the release of RbcX2. In terms of biological role, when rbcL-rbcX-rbcS or rbcL-rbcS were overexpressed in E.coli no change in reconstituted RuBisCO activity was observed, which suggests RbcX plays no role in RuBisCO assembly in this system. However in PubMed:8472962 E.coli chaperones groL and groS were also overexpressed, which may compensate for lack of rbcX. The chain is RuBisCO chaperone RbcX from Nostoc sp. (strain PCC 7120 / SAG 25.82 / UTEX 2576).